Consider the following 191-residue polypeptide: Protein LIGHT-DEPENDENT SHORT HYPOCOTYLS 9 (191 aa).

The span at 1 to 14 (MSSDRHTPTKDPPD) shows a compositional bias: basic and acidic residues. Disordered regions lie at residues 1 to 41 (MSSD…YESQ) and 153 to 191 (QAKARGIPYRKKKRRKTKNEVVVVKKDVANSSTPNQSFT). The ALOG domain occupies 37–165 (RYESQKRRDW…ARGIPYRKKK (129 aa)). Basic residues predominate over residues 160–169 (PYRKKKRRKT). The short motif at 163–167 (KKKRR) is the Nuclear localization signal element. Polar residues predominate over residues 181 to 191 (ANSSTPNQSFT).

The protein belongs to the plant homeotic and developmental regulators ALOG protein family.

It is found in the nucleus. Probable transcription regulator that acts as a developmental regulator by promoting cell growth in response to light. This Arabidopsis thaliana (Mouse-ear cress) protein is Protein LIGHT-DEPENDENT SHORT HYPOCOTYLS 9 (LSH9).